A 51-amino-acid polypeptide reads, in one-letter code: Large ribosomal subunit protein eL39 (51 aa).

Belongs to the eukaryotic ribosomal protein eL39 family.

The sequence is that of Large ribosomal subunit protein eL39 (rpl39e) from Methanothermobacter thermautotrophicus (strain ATCC 29096 / DSM 1053 / JCM 10044 / NBRC 100330 / Delta H) (Methanobacterium thermoautotrophicum).